We begin with the raw amino-acid sequence, 93 residues long: Putative pterin-4-alpha-carbinolamine dehydratase (93 aa).

This sequence belongs to the pterin-4-alpha-carbinolamine dehydratase family.

It carries out the reaction (4aS,6R)-4a-hydroxy-L-erythro-5,6,7,8-tetrahydrobiopterin = (6R)-L-erythro-6,7-dihydrobiopterin + H2O. The protein is Putative pterin-4-alpha-carbinolamine dehydratase of Roseiflexus castenholzii (strain DSM 13941 / HLO8).